The sequence spans 341 residues: DnaJ homolog subfamily C member 22 (341 aa).

The 48-residue stretch at 3–50 (KGLLVTYALWAVGGPAGLHHLYLGRDSHALLWMLTLGGGGLGWLWEFW) folds into the TM2 domain. A run of 7 helical transmembrane segments spans residues 5–25 (LLVT…HLYL), 30–50 (HALL…WEFW), 81–101 (FAAQ…SLSS), 105–125 (FYIV…AAVG), 135–155 (LGAA…ILPI), 185–205 (LGLA…CNTA), and 218–238 (FLNW…VLLL). In terms of domain architecture, J spans 277-341 (LAYQVLGLSE…QPRKPRGSRR (65 aa)).

The protein localises to the membrane. May function as a co-chaperone. The protein is DnaJ homolog subfamily C member 22 (DNAJC22) of Pongo abelii (Sumatran orangutan).